The following is a 306-amino-acid chain: Peroxisome biogenesis factor 2 (306 aa).

Residues 1–15 (MAASENNMEEINPVL) lie on the Peroxisomal matrix side of the membrane. The helical transmembrane segment at 16-42 (RISQLDAIELNKALEQLIWSQFSSCFQ) threads the bilayer. Residues 43–48 (GFKPGL) are Cytoplasmic-facing. A helical transmembrane segment spans residues 49–74 (LTRFEPEIKASLCLFLWRYTIYTKNA). Topologically, residues 75 to 98 (TVGQTILNMQYKNDLAVTKKYRPL) are peroxisomal matrix. The helical transmembrane segment at 99 to 125 (NKQQKVWFALFLVGGKWLEERSFDLFS) threads the bilayer. Residues 126 to 134 (NHPFGASFQ) are Cytoplasmic-facing. The chain crosses the membrane as a helical span at residues 135–161 (RTKYFLNAISGLLKFGALLNFLIFLQQ). Residues 162 to 188 (GKFATLTERLLGIRSVFSRPQDVRQVG) are Peroxisomal matrix-facing. A helical transmembrane segment spans residues 189 to 212 (FEYMNREILWHGFAEFLIFLLPLI). At 213–306 (NTQKLKSKLF…KIEISEVHTL (94 aa)) the chain is on the cytoplasmic side. Zn(2+)-binding residues include Cys245, Cys248, Cys260, His262, Cys265, Cys268, Cys281, and Cys284. The RING-type zinc-finger motif lies at 245 to 285 (CCLCGEWPAMPHTIGCSHVFCYYCIKSNYMSDMYFTCPKCS).

This sequence belongs to the pex2/pex10/pex12 family. Component of the PEX2-PEX10-PEX12 retrotranslocation channel.

The protein resides in the peroxisome membrane. It catalyses the reaction [E2 ubiquitin-conjugating enzyme]-S-ubiquitinyl-L-cysteine + [acceptor protein]-L-cysteine = [E2 ubiquitin-conjugating enzyme]-L-cysteine + [acceptor protein]-S-ubiquitinyl-L-cysteine.. The enzyme catalyses S-ubiquitinyl-[E2 ubiquitin-conjugating enzyme]-L-cysteine + [acceptor protein]-L-lysine = [E2 ubiquitin-conjugating enzyme]-L-cysteine + N(6)-ubiquitinyl-[acceptor protein]-L-lysine.. It functions in the pathway protein modification; protein ubiquitination. Its function is as follows. E3 ubiquitin-protein ligase component of a retrotranslocation channel required for peroxisome organization by mediating export of the PEX5 receptor from peroxisomes to the cytosol, thereby promoting PEX5 recycling. The retrotranslocation channel is composed of PEX2, PEX10 and PEX12; each subunit contributing transmembrane segments that coassemble into an open channel that specifically allows the passage of PEX5 through the peroxisomal membrane. PEX2 also regulates peroxisome organization by acting as a E3 ubiquitin-protein ligase. This Xenopus laevis (African clawed frog) protein is Peroxisome biogenesis factor 2.